A 91-amino-acid polypeptide reads, in one-letter code: UPF0386 protein CC_0226 (91 aa).

It belongs to the UPF0386 family.

In Caulobacter vibrioides (strain ATCC 19089 / CIP 103742 / CB 15) (Caulobacter crescentus), this protein is UPF0386 protein CC_0226.